Consider the following 290-residue polypeptide: 4-hydroxy-tetrahydrodipicolinate synthase (290 aa).

Pyruvate is bound at residue T45. The Proton donor/acceptor role is filled by Y133. The active-site Schiff-base intermediate with substrate is K161. I203 contacts pyruvate.

It belongs to the DapA family. As to quaternary structure, homotetramer; dimer of dimers.

It is found in the cytoplasm. It catalyses the reaction L-aspartate 4-semialdehyde + pyruvate = (2S,4S)-4-hydroxy-2,3,4,5-tetrahydrodipicolinate + H2O + H(+). Its pathway is amino-acid biosynthesis; L-lysine biosynthesis via DAP pathway; (S)-tetrahydrodipicolinate from L-aspartate: step 3/4. Its function is as follows. Catalyzes the condensation of (S)-aspartate-beta-semialdehyde [(S)-ASA] and pyruvate to 4-hydroxy-tetrahydrodipicolinate (HTPA). The protein is 4-hydroxy-tetrahydrodipicolinate synthase of Cellvibrio japonicus (strain Ueda107) (Pseudomonas fluorescens subsp. cellulosa).